We begin with the raw amino-acid sequence, 487 residues long: Calcium-dependent mitochondrial ATP-magnesium/phosphate carrier protein 2 (487 aa).

Residues 1 to 211 lie on the Mitochondrial intermembrane side of the membrane; it reads MEATKSSKQN…ISKHIKRSNY (211 aa). 4 EF-hand domains span residues 36-71, 72-107, 108-138, and 139-174; these read ERDLRIRSLFSFFDSENVGYLDCAQIEKGLCALQIP, SGYKYAKELFRVCDANRDGRVDYHEFRRYMDDKELE, LYRIFQAIDVEHNGCISPEGLWDSLVKAGIE, and IKDEELARFVEHVDKDNDGIIMFEEWRDFLLLYPHE. Positions 85, 87, 89, 91, and 96 each coordinate Ca(2+). Residues Asp-152, Asp-154, Asp-156, and Glu-163 each coordinate Ca(2+). Solcar repeat units lie at residues 206-289, 301-389, and 400-483; these read IKRS…FKNA, IGTT…LKDL, and PGPL…MKKS. A helical membrane pass occupies residues 212 to 229; it reads FIAGGIAGAASRTATAPL. Over 230–263 the chain is Mitochondrial matrix; sequence DRLKVLLQIQKTDARIREAIKLIWKQGGVRGFFR. The helical transmembrane segment at 264–283 threads the bilayer; the sequence is GNGLNIVKVAPESAIKFYAY. Topologically, residues 284 to 310 are mitochondrial intermembrane; the sequence is ELFKNAIGENMGEDKADIGTTVRLFAG. A helical membrane pass occupies residues 311-324; the sequence is GMAGAVAQASIYPL. Residues 325–363 lie on the Mitochondrial matrix side of the membrane; it reads DLVKTRLQTYTSQAGVAVPRLGTLTKDILVHEGPRAFYK. The helical transmembrane segment at 364–383 threads the bilayer; it reads GLFPSLLGIIPYAGIDLAAY. Residues 384–405 lie on the Mitochondrial intermembrane side of the membrane; the sequence is ETLKDLSRTYILQDAEPGPLVQ. Residues 406 to 423 form a helical membrane-spanning segment; sequence LGCGTISGALGATCVYPL. Over 424–457 the chain is Mitochondrial matrix; sequence QVVRTRMQAERARTSMSGVFRRTISEEGYRALYK. The chain crosses the membrane as a helical span at residues 458-477; sequence GLLPNLLKVVPAASITYMVY. Topologically, residues 478 to 487 are mitochondrial intermembrane; that stretch reads EAMKKSLELD.

Belongs to the mitochondrial carrier (TC 2.A.29) family. As to expression, expressed in flowers, leaves, stems, roots and seedlings, mostly in aerial parts.

The protein resides in the mitochondrion inner membrane. Its activity is regulated as follows. Counter-exchange transport activity is saturable and inhibited by pyridoxal-5'-phosphate, EDTA and EGTA. Activated by calcium Ca(2+) and manganese Mn(2+) ions, and slightly by iron Fe(2+) and zinc Zn(2+) ions. Repressed by copper ions Cu(2+) and slightly by magnesium Mg(2+) ions. Magnesium Mg(2+) ions promotes slightly ATP uptake, ATP-Mg(2+) being exchanged with ATP(4-). In terms of biological role, calcium-dependent mitochondrial carrier protein that catalyzes the import of ATP co-transported with metal divalent cations across the mitochondrial inner membrane in exchange for phosphate (Pi). Can transport phosphate, AMP, ADP, ATP, adenosine 5'-phosphosulfate, sulfate and thiosulfate, and, to a lesser extent, other nucleotides. Binds calcium ions Ca(2+). Also mediates calcium uptake. This Arabidopsis thaliana (Mouse-ear cress) protein is Calcium-dependent mitochondrial ATP-magnesium/phosphate carrier protein 2.